A 110-amino-acid polypeptide reads, in one-letter code: Minor capsid protein VP2 (110 aa).

Belongs to the vesivirus VP2 protein family. Homooligomer. The portal-like structure consists in 12 copies of VP2. Interacts with capsid protein VP1.

It is found in the virion. The protein localises to the host cytoplasm. Its function is as follows. Minor structural protein that forms a portal-like structure at a unique three-fold axis of symmetry, following binding to the host receptor. The channel formed by VP2 may allow the delivery of the viral genome through the host endosomal membrane. This is Minor capsid protein VP2 from Otariidae (fur seals &amp; sea lions).